The following is a 367-amino-acid chain: Methylthioribose-1-phosphate isomerase (367 aa).

The active-site Proton donor is the D250.

It belongs to the eIF-2B alpha/beta/delta subunits family. MtnA subfamily.

The protein resides in the cytoplasm. It is found in the nucleus. The enzyme catalyses 5-(methylsulfanyl)-alpha-D-ribose 1-phosphate = 5-(methylsulfanyl)-D-ribulose 1-phosphate. It participates in amino-acid biosynthesis; L-methionine biosynthesis via salvage pathway; L-methionine from S-methyl-5-thio-alpha-D-ribose 1-phosphate: step 1/6. In terms of biological role, catalyzes the interconversion of methylthioribose-1-phosphate (MTR-1-P) into methylthioribulose-1-phosphate (MTRu-1-P). In Hordeum vulgare (Barley), this protein is Methylthioribose-1-phosphate isomerase (IDI2).